The chain runs to 298 residues: Small ribosomal subunit biogenesis GTPase RsgA 1 (298 aa).

In terms of domain architecture, CP-type G spans 63-224; it reads QTQLVRPPVA…VADTPGFSSY (162 aa). Residues 112-115 and 167-175 each bind GTP; these read AKTD and GQTGAGKST. Residues Cys-248, Cys-253, His-255, and Cys-261 each coordinate Zn(2+).

It belongs to the TRAFAC class YlqF/YawG GTPase family. RsgA subfamily. Monomer. Associates with 30S ribosomal subunit, binds 16S rRNA. The cofactor is Zn(2+).

Its subcellular location is the cytoplasm. One of several proteins that assist in the late maturation steps of the functional core of the 30S ribosomal subunit. Helps release RbfA from mature subunits. May play a role in the assembly of ribosomal proteins into the subunit. Circularly permuted GTPase that catalyzes slow GTP hydrolysis, GTPase activity is stimulated by the 30S ribosomal subunit. This is Small ribosomal subunit biogenesis GTPase RsgA 1 from Lactiplantibacillus plantarum (strain ATCC BAA-793 / NCIMB 8826 / WCFS1) (Lactobacillus plantarum).